The following is a 103-amino-acid chain: Large ribosomal subunit protein bL21 (103 aa).

This sequence belongs to the bacterial ribosomal protein bL21 family. Part of the 50S ribosomal subunit. Contacts protein L20.

Functionally, this protein binds to 23S rRNA in the presence of protein L20. The protein is Large ribosomal subunit protein bL21 of Acidovorax ebreus (strain TPSY) (Diaphorobacter sp. (strain TPSY)).